The chain runs to 202 residues: Holliday junction branch migration complex subunit RuvA (202 aa).

The tract at residues 1-65 is domain I; the sequence is MIAYVEGRLA…EDALELYGFA (65 aa). The tract at residues 66–144 is domain II; that stretch reads TWDERQTFIV…VEDLPAAAPL (79 aa). Residues 145–155 are flexible linker; sequence VTGGAPGGVFR. Residues 155–202 are domain III; the sequence is RDALAGLANLGYGEEEASHVLKDVLHGEPDLDVGGALRAALRALARGR.

This sequence belongs to the RuvA family. In terms of assembly, homotetramer. Forms an RuvA(8)-RuvB(12)-Holliday junction (HJ) complex. HJ DNA is sandwiched between 2 RuvA tetramers; dsDNA enters through RuvA and exits via RuvB. An RuvB hexamer assembles on each DNA strand where it exits the tetramer. Each RuvB hexamer is contacted by two RuvA subunits (via domain III) on 2 adjacent RuvB subunits; this complex drives branch migration. In the full resolvosome a probable DNA-RuvA(4)-RuvB(12)-RuvC(2) complex forms which resolves the HJ.

Its subcellular location is the cytoplasm. In terms of biological role, the RuvA-RuvB-RuvC complex processes Holliday junction (HJ) DNA during genetic recombination and DNA repair, while the RuvA-RuvB complex plays an important role in the rescue of blocked DNA replication forks via replication fork reversal (RFR). RuvA specifically binds to HJ cruciform DNA, conferring on it an open structure. The RuvB hexamer acts as an ATP-dependent pump, pulling dsDNA into and through the RuvAB complex. HJ branch migration allows RuvC to scan DNA until it finds its consensus sequence, where it cleaves and resolves the cruciform DNA. The chain is Holliday junction branch migration complex subunit RuvA from Nitratidesulfovibrio vulgaris (strain ATCC 29579 / DSM 644 / CCUG 34227 / NCIMB 8303 / VKM B-1760 / Hildenborough) (Desulfovibrio vulgaris).